Here is a 283-residue protein sequence, read N- to C-terminus: Short-chain dehydrogenase cctT (283 aa).

Positions 1-20 are cleaved as a signal peptide; that stretch reads MLKTVLITGCSHGGLGAAMA. NADP(+) is bound by residues isoleucine 7, threonine 33, lysine 39, glutamate 55, and asparagine 83. A glycan (N-linked (GlcNAc...) asparagine) is linked at asparagine 131. Serine 133 functions as the Proton donor in the catalytic mechanism. Residues tyrosine 147, arginine 151, valine 180, and threonine 182 each coordinate NADP(+). Catalysis depends on tyrosine 147, which acts as the Proton acceptor.

It belongs to the short-chain dehydrogenases/reductases (SDR) family.

Its function is as follows. Short-chain dehydrogenase; part of the gene cluster that mediates the biosynthesis of the mycotoxin cyclochlorotine, a hepatotoxic and carcinogenic cyclic chlorinated pentapeptide. The function of cctT within the pathway, if any, remains undetermined. The NRPS cctN initially catalyzes the condensation of L-serine (Ser), Pro, L-2-aminobutyrate (2Abu), Ser, and beta-Phe in this order to produce isocyclotine. After the dichlorination of Pro2 catalyzed by cctP2 to produce isocyclochlorotine, the cctO-mediated transacylation of isocyclochlorotine can furnish cyclochlorotine. The subsequent hydroxylation of cyclochlorotine by cctR yields hydroxycyclochlorotine as the final product. CctP1 probably acts as a phenylalanine aminomutase and provides the uncommon building block beta-Phe. Furthermore, 2Abu can be synthesized from threonine by one of the threonine dehydratases and transaminases localized outside of the cluster. The functions of the remaining proteins encoded by the cluster, cctM and cctT, have not been identified yet. The sequence is that of Short-chain dehydrogenase cctT from Talaromyces islandicus (Penicillium islandicum).